Here is a 293-residue protein sequence, read N- to C-terminus: Ribosomal protein L11 methyltransferase (293 aa).

4 residues coordinate S-adenosyl-L-methionine: T145, G166, D188, and N230.

Belongs to the methyltransferase superfamily. PrmA family.

The protein localises to the cytoplasm. The catalysed reaction is L-lysyl-[protein] + 3 S-adenosyl-L-methionine = N(6),N(6),N(6)-trimethyl-L-lysyl-[protein] + 3 S-adenosyl-L-homocysteine + 3 H(+). Functionally, methylates ribosomal protein L11. This is Ribosomal protein L11 methyltransferase from Shewanella sp. (strain ANA-3).